The sequence spans 696 residues: GPI mannosyltransferase 4 (696 aa).

6 consecutive transmembrane segments (helical) span residues 100 to 120 (WQLE…IYTL), 125 to 142 (NDYC…RFEI), 149 to 169 (SSWI…EMAM), 185 to 205 (NTVV…ESIS), 227 to 247 (AMST…LFGA), and 338 to 358 (YVHL…ASLG).

This sequence belongs to the glycosyltransferase 22 family. PIGZ subfamily.

The protein localises to the endoplasmic reticulum membrane. It participates in glycolipid biosynthesis; glycosylphosphatidylinositol-anchor biosynthesis. Its function is as follows. Mannosyltransferase involved in glycosylphosphatidylinositol-anchor biosynthesis. Transfers a fourth mannose to some trimannosyl-GPIs during GPI precursor assembly. This Drosophila melanogaster (Fruit fly) protein is GPI mannosyltransferase 4.